We begin with the raw amino-acid sequence, 356 residues long: Protein-glutamate methylesterase/protein-glutamine glutaminase 2 (356 aa).

The region spanning lysine 6–arginine 123 is the Response regulatory domain. Aspartate 57 bears the 4-aspartylphosphate mark. The region spanning valine 165–serine 356 is the CheB-type methylesterase domain. Active-site residues include serine 177, histidine 203, and aspartate 299.

This sequence belongs to the CheB family. Post-translationally, phosphorylated by CheA. Phosphorylation of the N-terminal regulatory domain activates the methylesterase activity.

The protein localises to the cytoplasm. The enzyme catalyses [protein]-L-glutamate 5-O-methyl ester + H2O = L-glutamyl-[protein] + methanol + H(+). It carries out the reaction L-glutaminyl-[protein] + H2O = L-glutamyl-[protein] + NH4(+). Functionally, involved in chemotaxis. Part of a chemotaxis signal transduction system that modulates chemotaxis in response to various stimuli. Catalyzes the demethylation of specific methylglutamate residues introduced into the chemoreceptors (methyl-accepting chemotaxis proteins or MCP) by CheR. Also mediates the irreversible deamidation of specific glutamine residues to glutamic acid. This chain is Protein-glutamate methylesterase/protein-glutamine glutaminase 2, found in Oleidesulfovibrio alaskensis (strain ATCC BAA-1058 / DSM 17464 / G20) (Desulfovibrio alaskensis).